We begin with the raw amino-acid sequence, 1564 residues long: Tetratricopeptide repeat protein 37 (1564 aa).

TPR repeat units lie at residues 6 to 39 (VKAI…EKNN), 40 to 73 (YNAW…EPDQ), 75 to 110 (LAWQ…YRSS), 116 to 149 (YEIC…KEDE), 237 to 271 (IYPL…DPLN), 306 to 339 (PSAW…ATQD), 420 to 453 (AEGH…KPEN), 456 to 492 (YHYY…DPFM), 493 to 527 (SRAF…DDSD), 564 to 597 (KWAW…DPKD), 598 to 631 (SNCW…NPDS), 633 to 665 (YSVY…SGEY), 678 to 713 (MLAK…RPDL), 743 to 776 (LLGN…QSTA), 861 to 894 (VAAW…DPLY), 980 to 1013 (RTAF…LQER), 1020 to 1050 (NSAL…PLTE), 1051 to 1084 (FDDL…AKSD), and 1400 to 1433 (HNAW…ASQQ).

The sequence is that of Tetratricopeptide repeat protein 37 (ttc37) from Xenopus laevis (African clawed frog).